Consider the following 117-residue polypeptide: MARILTRIKEAEENNQKKEEQVKAELAQYEQLKNNELIDLNKEFQERLTKLMKEKEKNEEEVTEDEQHKLELILEQFRQKVLEIEKTYLEKEEEEIAKKKNLTNEIIERMKQNNGCH.

The disordered stretch occupies residues 1–20; the sequence is MARILTRIKEAEENNQKKEE. Basic and acidic residues predominate over residues 7–20; sequence RIKEAEENNQKKEE.

It belongs to the V-ATPase G subunit family.

Involved in ATP-driven sodium extrusion. The chain is V-type sodium ATPase subunit F (ntpF) from Enterococcus hirae (strain ATCC 9790 / DSM 20160 / JCM 8729 / LMG 6399 / NBRC 3181 / NCIMB 6459 / NCDO 1258 / NCTC 12367 / WDCM 00089 / R).